A 267-amino-acid polypeptide reads, in one-letter code: tRNA pseudouridine synthase A (267 aa).

Residue aspartate 53 is the Nucleophile of the active site. Residue tyrosine 114 participates in substrate binding.

The protein belongs to the tRNA pseudouridine synthase TruA family. In terms of assembly, homodimer.

It catalyses the reaction uridine(38/39/40) in tRNA = pseudouridine(38/39/40) in tRNA. Functionally, formation of pseudouridine at positions 38, 39 and 40 in the anticodon stem and loop of transfer RNAs. This Chlamydia trachomatis serovar L2b (strain UCH-1/proctitis) protein is tRNA pseudouridine synthase A.